Consider the following 119-residue polypeptide: Dihydroneopterin aldolase (119 aa).

Residues E21, Y53, and 72 to 73 each bind substrate; that span reads IE. K99 serves as the catalytic Proton donor/acceptor.

This sequence belongs to the DHNA family.

The catalysed reaction is 7,8-dihydroneopterin = 6-hydroxymethyl-7,8-dihydropterin + glycolaldehyde. It participates in cofactor biosynthesis; tetrahydrofolate biosynthesis; 2-amino-4-hydroxy-6-hydroxymethyl-7,8-dihydropteridine diphosphate from 7,8-dihydroneopterin triphosphate: step 3/4. In terms of biological role, catalyzes the conversion of 7,8-dihydroneopterin to 6-hydroxymethyl-7,8-dihydropterin. The protein is Dihydroneopterin aldolase (folB) of Streptococcus pyogenes serotype M3 (strain ATCC BAA-595 / MGAS315).